Reading from the N-terminus, the 215-residue chain is Ribonuclease (215 aa).

The first 22 residues, 1–22 (MKKIVVLLGMLLAPWFSSAVQA), serve as a signal peptide directing secretion. Residues histidine 62, glutamate 102, and histidine 106 contribute to the active site. The disordered stretch occupies residues 144–166 (KPLPAQGGSGQCQRLAGPGQHHG).

The protein belongs to the RNase T2 family.

The protein localises to the periplasm. It is found in the cytoplasm. Its function is as follows. One of the few RNases that cleave the phosphodiester bond between any two nucleotide. Shows a preference for adenylic acid. The protein is Ribonuclease of Aeromonas hydrophila.